Consider the following 201-residue polypeptide: MENLPEPLRVVAQELAKLPGLGPKSALRIALTMLKMPKEKVTGIGQSVIDLREKLCICEQCASITDTCPCRICSDPKREHDKLCLVSEWDSLLAIEEMGLYRGYYLVLGGLLSPLDGVTPQHLEFQKLEERLEKGEVKELILALGATVDAEATASYIKNMVESKYPGIELSRLAQGIPIGSEVKYTDKETLRQSLEYRQKL.

A C4-type zinc finger spans residues 58–73; it reads CEQCASITDTCPCRIC. A Toprim domain is found at 81 to 178; the sequence is DKLCLVSEWD…ELSRLAQGIP (98 aa).

The protein belongs to the RecR family.

May play a role in DNA repair. It seems to be involved in an RecBC-independent recombinational process of DNA repair. It may act with RecF and RecO. This is Recombination protein RecR from Maridesulfovibrio salexigens (strain ATCC 14822 / DSM 2638 / NCIMB 8403 / VKM B-1763) (Desulfovibrio salexigens).